Consider the following 260-residue polypeptide: Thiazole synthase (260 aa).

K96 acts as the Schiff-base intermediate with DXP in catalysis. 1-deoxy-D-xylulose 5-phosphate is bound by residues G157, A184–G185, and N206–T207.

This sequence belongs to the ThiG family. In terms of assembly, homotetramer. Forms heterodimers with either ThiH or ThiS.

The protein resides in the cytoplasm. It carries out the reaction [ThiS sulfur-carrier protein]-C-terminal-Gly-aminoethanethioate + 2-iminoacetate + 1-deoxy-D-xylulose 5-phosphate = [ThiS sulfur-carrier protein]-C-terminal Gly-Gly + 2-[(2R,5Z)-2-carboxy-4-methylthiazol-5(2H)-ylidene]ethyl phosphate + 2 H2O + H(+). It participates in cofactor biosynthesis; thiamine diphosphate biosynthesis. Functionally, catalyzes the rearrangement of 1-deoxy-D-xylulose 5-phosphate (DXP) to produce the thiazole phosphate moiety of thiamine. Sulfur is provided by the thiocarboxylate moiety of the carrier protein ThiS. In vitro, sulfur can be provided by H(2)S. This is Thiazole synthase from Bradyrhizobium diazoefficiens (strain JCM 10833 / BCRC 13528 / IAM 13628 / NBRC 14792 / USDA 110).